Here is a 1229-residue protein sequence, read N- to C-terminus: Alpha,alpha-trehalose-phosphate synthase [UDP-forming] 2 (1229 aa).

Residues 196 to 233 (VSSDSEGEEAIHNVRSGTHTESESEEDPKAPRSGLATS) form a disordered region. Residues 213–225 (THTESESEEDPKA) show a composition bias toward basic and acidic residues.

It in the N-terminal section; belongs to the glycosyltransferase 20 family. The protein in the C-terminal section; belongs to the gob-1 trehalose phosphatase family.

It catalyses the reaction D-glucose 6-phosphate + UDP-alpha-D-glucose = alpha,alpha-trehalose 6-phosphate + UDP + H(+). Functionally, catalyzes the production of trehalose from glucose-6-phosphate and UDP-alpha-D-glucose in a 2 step process. The protein is Alpha,alpha-trehalose-phosphate synthase [UDP-forming] 2 (tps-2) of Caenorhabditis elegans.